Consider the following 198-residue polypeptide: MYDYIKGQLTKITAKYIVVEANGLGYMINVANPYSFTDSVNQLVTIYLHQVIREDAHLLFGFHTEDEKDVFLKLISVSGIGPTTALAIVAVDDNEGLVNAIDNSDIKYLMKFPKIGKKTAQQMVLDLAGKFVEAPQETGHTKARSNKAGNTQLDEAIEALLALGYKAKELKKIRAFFEGTSETAEQYIKSALKLLMKG.

Positions 1–63 are domain I; it reads MYDYIKGQLT…EDAHLLFGFH (63 aa). The domain II stretch occupies residues 64 to 142; sequence TEDEKDVFLK…EAPQETGHTK (79 aa). A flexible linker region spans residues 143-147; that stretch reads ARSNK. The tract at residues 148–198 is domain III; it reads AGNTQLDEAIEALLALGYKAKELKKIRAFFEGTSETAEQYIKSALKLLMKG.

The protein belongs to the RuvA family. As to quaternary structure, homotetramer. Forms an RuvA(8)-RuvB(12)-Holliday junction (HJ) complex. HJ DNA is sandwiched between 2 RuvA tetramers; dsDNA enters through RuvA and exits via RuvB. An RuvB hexamer assembles on each DNA strand where it exits the tetramer. Each RuvB hexamer is contacted by two RuvA subunits (via domain III) on 2 adjacent RuvB subunits; this complex drives branch migration. In the full resolvosome a probable DNA-RuvA(4)-RuvB(12)-RuvC(2) complex forms which resolves the HJ.

The protein resides in the cytoplasm. Functionally, the RuvA-RuvB-RuvC complex processes Holliday junction (HJ) DNA during genetic recombination and DNA repair, while the RuvA-RuvB complex plays an important role in the rescue of blocked DNA replication forks via replication fork reversal (RFR). RuvA specifically binds to HJ cruciform DNA, conferring on it an open structure. The RuvB hexamer acts as an ATP-dependent pump, pulling dsDNA into and through the RuvAB complex. HJ branch migration allows RuvC to scan DNA until it finds its consensus sequence, where it cleaves and resolves the cruciform DNA. This Streptococcus pyogenes serotype M1 protein is Holliday junction branch migration complex subunit RuvA.